The primary structure comprises 285 residues: Pantothenate synthetase (285 aa).

30–37 (MGYLHAGH) lines the ATP pocket. H37 serves as the catalytic Proton donor. Q61 is a binding site for (R)-pantoate. Position 61 (Q61) interacts with beta-alanine. Residue 147–150 (GQKD) coordinates ATP. Q153 serves as a coordination point for (R)-pantoate. ATP contacts are provided by residues V176 and 184–187 (LSSR).

It belongs to the pantothenate synthetase family. Homodimer.

Its subcellular location is the cytoplasm. It carries out the reaction (R)-pantoate + beta-alanine + ATP = (R)-pantothenate + AMP + diphosphate + H(+). Its pathway is cofactor biosynthesis; (R)-pantothenate biosynthesis; (R)-pantothenate from (R)-pantoate and beta-alanine: step 1/1. Its function is as follows. Catalyzes the condensation of pantoate with beta-alanine in an ATP-dependent reaction via a pantoyl-adenylate intermediate. This is Pantothenate synthetase from Solidesulfovibrio magneticus (strain ATCC 700980 / DSM 13731 / RS-1) (Desulfovibrio magneticus).